Consider the following 232-residue polypeptide: Very-long-chain (3R)-3-hydroxyacyl-CoA dehydratase 4 (232 aa).

Over 1 to 19 the chain is Cytoplasmic; that stretch reads MGPSVLPAWLQPRYRKNVY. A helical membrane pass occupies residues 20-40; that stretch reads LFIYYLIQFCGHSWILANMTV. At 41 to 56 the chain is on the lumenal side; that stretch reads RFFSFGKDSMADTFYA. Residues 57-77 form a helical membrane-spanning segment; it reads IGLVMRVCQSISLLELLHIYI. Topologically, residues 78-112 are cytoplasmic; the sequence is GIESNQLFPRFLQLTERVIILFGVITSQEEVQEKC. A helical membrane pass occupies residues 113–133; the sequence is VVCVLFILWNLLDMVRYTYSM. Residues 134–135 are Lumenal-facing; the sequence is LS. The helical transmembrane segment at 136–156 threads the bilayer; sequence VIGTSYAALTWLSQTLWMPIY. Y156 is a catalytic residue. A topological domain (cytoplasmic) is located at residue P157. Residues 158-178 form a helical membrane-spanning segment; that stretch reads LCVLAEAFTIYQSLPYFESFG. The active site involves E163. Residues 179–189 are Lumenal-facing; sequence TNSTVLPFDLS. A helical membrane pass occupies residues 190-210; that stretch reads TCFPYVLKLYLMMLFIGMYFT. The Cytoplasmic segment spans residues 211-232; it reads YSHLYTERKDFLRVFSVKQKNV.

The protein belongs to the very long-chain fatty acids dehydratase HACD family. May interact with enzymes of the ELO family (including ELOVL1); with those enzymes that mediate condensation, the first of the four steps of the reaction cycle responsible for fatty acids elongation, may be part of a larger fatty acids elongase complex.

The protein resides in the endoplasmic reticulum membrane. It carries out the reaction a very-long-chain (3R)-3-hydroxyacyl-CoA = a very-long-chain (2E)-enoyl-CoA + H2O. The catalysed reaction is (3R)-hydroxyhexadecanoyl-CoA = (2E)-hexadecenoyl-CoA + H2O. Its pathway is lipid metabolism; fatty acid biosynthesis. In terms of biological role, catalyzes the third of the four reactions of the long-chain fatty acids elongation cycle. This endoplasmic reticulum-bound enzymatic process, allows the addition of two carbons to the chain of long- and very long-chain fatty acids/VLCFAs per cycle. This enzyme catalyzes the dehydration of the 3-hydroxyacyl-CoA intermediate into trans-2,3-enoyl-CoA, within each cycle of fatty acid elongation. Thereby, it participates in the production of VLCFAs of different chain lengths that are involved in multiple biological processes as precursors of membrane lipids and lipid mediators. The chain is Very-long-chain (3R)-3-hydroxyacyl-CoA dehydratase 4 from Mus musculus (Mouse).